The sequence spans 339 residues: tRNA N6-adenosine threonylcarbamoyltransferase (339 aa).

The Fe cation site is built by H107 and H111. Residues 129 to 133 (LVSGG), D162, G175, and N279 each bind substrate. A Fe cation-binding site is contributed by D307.

It belongs to the KAE1 / TsaD family. It depends on Fe(2+) as a cofactor.

It localises to the cytoplasm. It carries out the reaction L-threonylcarbamoyladenylate + adenosine(37) in tRNA = N(6)-L-threonylcarbamoyladenosine(37) in tRNA + AMP + H(+). Its function is as follows. Required for the formation of a threonylcarbamoyl group on adenosine at position 37 (t(6)A37) in tRNAs that read codons beginning with adenine. Is involved in the transfer of the threonylcarbamoyl moiety of threonylcarbamoyl-AMP (TC-AMP) to the N6 group of A37, together with TsaE and TsaB. TsaD likely plays a direct catalytic role in this reaction. The protein is tRNA N6-adenosine threonylcarbamoyltransferase of Campylobacter curvus (strain 525.92).